A 698-amino-acid chain; its full sequence is Adhesion G protein-coupled receptor F4 (698 aa).

Residues Met1 to Cys19 form the signal peptide. Residues Ser20–Thr409 are Extracellular-facing. N-linked (GlcNAc...) asparagine glycosylation is found at Asn61, Asn168, Asn213, Asn268, Asn290, Asn344, and Asn375. The 152-residue stretch at Arg250–Lys401 folds into the GAIN-B domain. Intrachain disulfides connect Cys353–Cys380 and Cys368–Cys382. The tract at residues Cys353–Lys401 is GPS. A helical membrane pass occupies residues Phe410 to Val430. At Trp431–His444 the chain is on the cytoplasmic side. A helical membrane pass occupies residues Val445–Ser465. The N-linked (GlcNAc...) asparagine glycan is linked to Asn466. At Asn466–His486 the chain is on the extracellular side. A helical membrane pass occupies residues Phe487–Ile507. At Leu508 to Arg518 the chain is on the cytoplasmic side. A helical transmembrane segment spans residues Met519–Val539. Residues Thr540–Ala566 are Extracellular-facing. N-linked (GlcNAc...) asparagine glycosylation occurs at Asn559. Residues Phe567 to Ile587 traverse the membrane as a helical segment. Topologically, residues Asn588–Asn611 are cytoplasmic. Residues Val612–Glu632 traverse the membrane as a helical segment. The Extracellular portion of the chain corresponds to Gly633–His635. A helical membrane pass occupies residues Leu636–Phe656. Residues Gly657 to Arg698 lie on the Cytoplasmic side of the membrane.

It belongs to the G-protein coupled receptor 2 family. Adhesion G-protein coupled receptor (ADGR) subfamily. Expressed in squamous epithelia.

The protein localises to the membrane. Functionally, orphan receptor. The chain is Adhesion G protein-coupled receptor F4 (Adgrf4) from Mus musculus (Mouse).